The primary structure comprises 316 residues: C1GALT1-specific chaperone 1 (316 aa).

Topologically, residues 1–6 (MLSESS) are cytoplasmic. The chain crosses the membrane as a helical; Signal-anchor for type II membrane protein span at residues 7 to 26 (SFLKGVMLGSIFCALITMLG). At 27 to 316 (HIRIGNRMHH…FLPPNGSEND (290 aa)) the chain is on the lumenal side.

The protein belongs to the glycosyltransferase 31 family. Beta3-Gal-T subfamily. Associates with core 1 beta-3-galactosyltransferase (C1GALT1), probably not with the soluble active form.

Its subcellular location is the membrane. In terms of biological role, probable chaperone required for the generation of 1 O-glycan Gal-beta1-3GalNAc-alpha1-Ser/Thr (T antigen), which is a precursor for many extended O-glycans in glycoproteins. Probably acts as a specific molecular chaperone assisting the folding/stability of core 1 beta-3-galactosyltransferase (C1GALT1). The chain is C1GALT1-specific chaperone 1 (C1galt1c1) from Rattus norvegicus (Rat).